Consider the following 806-residue polypeptide: MIPVAEFKQFTEQQPAFKVLKPWWDVLAEYITYAMLMIGVFGCTLQVTQDKIICLPNHTSADVVSQITCQEYDQQSPPSNDSDLETTIPPPTATSSPPREMSGLRNNLDLQQYSFINQMCYETALHWYAKYFPYLVVIHTLIFIICGNFWFKFPGTSSKIEHFISILGKCFDSPWTTRALSEVSGESSQEKPSQERSIDRELSKPNFEEGSPATADLPIAEKLVAETSSASVLDKKEGEQAKALFEKVKKFRHHVEEGDLLYSMYMRQTVLKVCKFVLITIYNAVLVGKIHFIVPCSVHTEDMTGYNSFCCNHTKAHLFSKLAITYLCFLGVYGLTCLYTLYWLFRRPLKEYSFRSVREETGIGDIPDVKNDFAFVLHLVDQYDSLYSKRFAVFLSEVSESRLRQLNLNHEWPADKLRQKLQHTPEGRLELHLFKLPGLPDTVFEVAEMESLKLEMVNEALIPPLVSKLVRLEELSLINCTAKVQHASLAYLRDHLRILQVKFDDIKEIPLWIFSLRALEELHLFGWLSQDLSKNPALESLRELKSLKVLTIKSNLSKIPATVADVAGHLQKFSIHNDGTKLLTLNALKRLALVKELELVRCELERIPHAVFSLTNLQVLDLKENTLHTIEEIISLQHCRKLSVLRLWHNQIAYIPEHIRKLKGLEELSLNRNKILVIPSQLFLCNKLRHLDLSNNEIRELPPEIGVLQLLQYLGLSGNFLEDLPNELFFCQKLKTLKLGQNRLGNLSPKVGSLVCLVKLELKGNRMDTLPPELGNCVSLKRSGLTVEPSLFETLPVEVRDKLKED.

Topologically, residues 1 to 22 (MIPVAEFKQFTEQQPAFKVLKP) are cytoplasmic. A helical transmembrane segment spans residues 23–43 (WWDVLAEYITYAMLMIGVFGC). The Extracellular segment spans residues 44–130 (TLQVTQDKII…YETALHWYAK (87 aa)). The cysteines at positions 54 and 311 are disulfide-linked. N-linked (GlcNAc...) asparagine glycosylation is found at asparagine 57 and asparagine 80. Residues 72-81 (YDQQSPPSND) are compositionally biased toward polar residues. The tract at residues 72–103 (YDQQSPPSNDSDLETTIPPPTATSSPPREMSG) is disordered. Residues 131 to 151 (YFPYLVVIHTLIFIICGNFWF) form a helical membrane-spanning segment. At 152–275 (KFPGTSSKIE…MRQTVLKVCK (124 aa)) the chain is on the cytoplasmic side. The segment at 182 to 213 (EVSGESSQEKPSQERSIDRELSKPNFEEGSPA) is disordered. Basic and acidic residues predominate over residues 188–207 (SQEKPSQERSIDRELSKPNF). Residues 276–296 (FVLITIYNAVLVGKIHFIVPC) traverse the membrane as a helical segment. At 297–323 (SVHTEDMTGYNSFCCNHTKAHLFSKLA) the chain is on the extracellular side. Asparagine 312 carries N-linked (GlcNAc...) asparagine glycosylation. Residues 324-344 (ITYLCFLGVYGLTCLYTLYWL) form a helical membrane-spanning segment. Residues 345-806 (FRRPLKEYSF…VEVRDKLKED (462 aa)) lie on the Cytoplasmic side of the membrane. LRR repeat units follow at residues 544–566 (LKSL…VADV), 569–589 (HLQK…NALK), 593–614 (LVKE…VFSL), 616–637 (NLQV…ISLQ), 641–662 (KLSV…IRKL), 664–685 (GLEE…LFLC), 687–708 (KLRH…IGVL), 710–731 (LLQY…LFFC), 733–754 (KLKT…VGSL), and 756–777 (CLVK…LGNC).

Belongs to the LRRC8 family. Heterohexamer; oligomerizes with other LRRC8 proteins (lrrc8a, lrrc8c, lrrc8d and/or lrrc8b) to form a heterohexamer. Detected in a channel complex that contains lrrc8a, lrrc8c and lrrc8e. In vivo, the subunit composition may depend primarily on expression levels, and heterooligomeric channels containing various proportions of the different LRRC8 proteins may coexist.

Its subcellular location is the cell membrane. It is found in the endoplasmic reticulum membrane. The protein resides in the lysosome membrane. The enzyme catalyses chloride(in) = chloride(out). It catalyses the reaction iodide(out) = iodide(in). It carries out the reaction taurine(out) = taurine(in). The catalysed reaction is 2',3'-cGAMP(out) = 2',3'-cGAMP(in). Non-essential component of the volume-regulated anion channel (VRAC, also named VSOAC channel), an anion channel required to maintain a constant cell volume in response to extracellular or intracellular osmotic changes. The VRAC channel conducts iodide better than chloride and can also conduct organic osmolytes like taurine. Mediates efflux of amino acids, such as aspartate, in response to osmotic stress. The VRAC channel also mediates transport of immunoreactive cyclic dinucleotide GMP-AMP (2'-3'-cGAMP), an immune messenger produced in response to DNA virus in the cytosol. Channel activity requires lrrc8a plus at least one other family member (lrrc8b, lrrc8c, lrrc8d or lrrc8e); channel characteristics depend on the precise subunit composition. Also plays a role in lysosome homeostasis by forming functional lysosomal VRAC channels in response to low cytoplasmic ionic strength condition: lysosomal VRAC channels are necessary for the formation of large lysosome-derived vacuoles, which store and then expel excess water to maintain cytosolic water homeostasis. This is Volume-regulated anion channel subunit LRRC8E from Xenopus tropicalis (Western clawed frog).